The sequence spans 353 residues: uncharacterized protein (353 aa).

Belongs to the mimivirus L17x/L18x family.

This is an uncharacterized protein from Acanthamoeba polyphaga (Amoeba).